Here is a 123-residue protein sequence, read N- to C-terminus: Small ribosomal subunit protein uS13 (123 aa).

The interval 93 to 123 (RRNLPVRGQKTKTNARTRKGPKRAIGGKKKK) is disordered.

This sequence belongs to the universal ribosomal protein uS13 family. As to quaternary structure, part of the 30S ribosomal subunit. Forms a loose heterodimer with protein S19. Forms two bridges to the 50S subunit in the 70S ribosome.

Located at the top of the head of the 30S subunit, it contacts several helices of the 16S rRNA. In the 70S ribosome it contacts the 23S rRNA (bridge B1a) and protein L5 of the 50S subunit (bridge B1b), connecting the 2 subunits; these bridges are implicated in subunit movement. Contacts the tRNAs in the A and P-sites. The sequence is that of Small ribosomal subunit protein uS13 from Clostridium botulinum (strain Loch Maree / Type A3).